The following is a 150-amino-acid chain: MSDKLHVLLLNGPNLNLLGTREPEKYGHTSLDEIVSELTLQASALGVTLSHLQSNAEHALIDRIHQAKGNVDYIVINPAAFTHTSVALRDALLAVSIPFIEVHLSNVHAREPFRHHSYLSDISTGVICGLGVDGYSWALQTAVKRLSLSH.

Catalysis depends on Tyr-26, which acts as the Proton acceptor. 3 residues coordinate substrate: Asn-77, His-83, and Asp-90. His-103 (proton donor) is an active-site residue. Residues 104–105 (LS) and Arg-114 contribute to the substrate site.

Belongs to the type-II 3-dehydroquinase family. As to quaternary structure, homododecamer.

The enzyme catalyses 3-dehydroquinate = 3-dehydroshikimate + H2O. The protein operates within metabolic intermediate biosynthesis; chorismate biosynthesis; chorismate from D-erythrose 4-phosphate and phosphoenolpyruvate: step 3/7. Its function is as follows. Catalyzes a trans-dehydration via an enolate intermediate. This is 3-dehydroquinate dehydratase from Erwinia tasmaniensis (strain DSM 17950 / CFBP 7177 / CIP 109463 / NCPPB 4357 / Et1/99).